A 412-amino-acid chain; its full sequence is uncharacterized protein (412 aa).

Disordered regions lie at residues 150–171, 177–196, and 302–412; these read NTPG…QLGD, QITS…QQQQ, and QAQQ…PLNP. Over residues 156–168 the composition is skewed to low complexity; that stretch reads QAQQQQQQQQQQQ. Composition is skewed to polar residues over residues 177 to 187 and 310 to 321; these read QITSSNNSGNS and MGSSPTHSSPTI. The segment covering 335-345 has biased composition (low complexity); it reads GGIINTNTNLN. Residues 350 to 363 show a composition bias toward polar residues; the sequence is VSPNQPMPNSSPIL. Low complexity-rich tracts occupy residues 364–373 and 381–394; these read PTNASSVVPP and TSNN…TTSP.

This is an uncharacterized protein from Dictyostelium discoideum (Social amoeba).